Reading from the N-terminus, the 1406-residue chain is DNA-directed RNA polymerase subunit beta' (1406 aa).

Zn(2+)-binding residues include Cys-70, Cys-72, Cys-85, and Cys-88. The Mg(2+) site is built by Asp-460, Asp-462, and Asp-464. Zn(2+) is bound by residues Cys-814, Cys-888, Cys-895, and Cys-898.

It belongs to the RNA polymerase beta' chain family. In terms of assembly, the RNAP catalytic core consists of 2 alpha, 1 beta, 1 beta' and 1 omega subunit. When a sigma factor is associated with the core the holoenzyme is formed, which can initiate transcription. Mg(2+) is required as a cofactor. Zn(2+) serves as cofactor.

The catalysed reaction is RNA(n) + a ribonucleoside 5'-triphosphate = RNA(n+1) + diphosphate. In terms of biological role, DNA-dependent RNA polymerase catalyzes the transcription of DNA into RNA using the four ribonucleoside triphosphates as substrates. The sequence is that of DNA-directed RNA polymerase subunit beta' from Sodalis glossinidius (strain morsitans).